We begin with the raw amino-acid sequence, 443 residues long: Xaa-Pro dipeptidase (443 aa).

Mn(2+) contacts are provided by Asp-246, Asp-257, His-339, Glu-384, and Glu-423.

The protein belongs to the peptidase M24B family. Bacterial-type prolidase subfamily. It depends on Mn(2+) as a cofactor.

The catalysed reaction is Xaa-L-Pro dipeptide + H2O = an L-alpha-amino acid + L-proline. Its function is as follows. Splits dipeptides with a prolyl residue in the C-terminal position. The polypeptide is Xaa-Pro dipeptidase (Salmonella arizonae (strain ATCC BAA-731 / CDC346-86 / RSK2980)).